Consider the following 831-residue polypeptide: Periplasmic nitrate reductase (831 aa).

The segment at residues 1 to 29 is a signal peptide (tat-type signal); that stretch reads MTVTRRDFVRHQALATAAAAAGVAVPAAA. The region spanning 41 to 97 is the 4Fe-4S Mo/W bis-MGD-type domain; that stretch reads LVWSKAPCRFCGTGCSVNVATKEGRVVATHGDIKSPVNRGLNCVKGYFLSKVMYGED. [4Fe-4S] cluster-binding residues include cysteine 48, cysteine 51, cysteine 55, and cysteine 83. Mo-bis(molybdopterin guanine dinucleotide) is bound by residues lysine 85, glutamine 152, asparagine 177, cysteine 181, 214 to 221, 245 to 249, 264 to 266, methionine 375, glutamine 379, asparagine 485, 511 to 512, lysine 534, aspartate 561, and 721 to 730; these read WGSNMAEM, STYEH, QSD, SD, and TGRVIEHWHS. Tryptophan 797 lines the substrate pocket. Mo-bis(molybdopterin guanine dinucleotide) contacts are provided by asparagine 805 and lysine 822.

Belongs to the prokaryotic molybdopterin-containing oxidoreductase family. NasA/NapA/NarB subfamily. As to quaternary structure, component of the periplasmic nitrate reductase NapAB complex composed of NapA and NapB. Requires [4Fe-4S] cluster as cofactor. It depends on Mo-bis(molybdopterin guanine dinucleotide) as a cofactor. In terms of processing, predicted to be exported by the Tat system. The position of the signal peptide cleavage has not been experimentally proven.

The protein resides in the periplasm. It catalyses the reaction 2 Fe(II)-[cytochrome] + nitrate + 2 H(+) = 2 Fe(III)-[cytochrome] + nitrite + H2O. Functionally, catalytic subunit of the periplasmic nitrate reductase complex NapAB. Receives electrons from NapB and catalyzes the reduction of nitrate to nitrite. The chain is Periplasmic nitrate reductase from Saccharophagus degradans (strain 2-40 / ATCC 43961 / DSM 17024).